The sequence spans 185 residues: Ribosome-recycling factor (185 aa).

This sequence belongs to the RRF family.

It localises to the cytoplasm. In terms of biological role, responsible for the release of ribosomes from messenger RNA at the termination of protein biosynthesis. May increase the efficiency of translation by recycling ribosomes from one round of translation to another. In Pseudomonas entomophila (strain L48), this protein is Ribosome-recycling factor.